Reading from the N-terminus, the 149-residue chain is MKCPFCGNRDTNVRDSRSVNEGTFIKRRRFCGECGAKFTTFETIQLKEIKVIKKNGSCESFDREKAMRSVEVALRKRPVTRERVDELMNSVIYKIERIHDAKITAKVIGELIMEELATLDKVAFIRFASVYMNFENEKDFVQLIGSLTS.

A zinc finger spans residues cysteine 3–cysteine 34. Residues isoleucine 49–aspartate 139 enclose the ATP-cone domain.

The protein belongs to the NrdR family. Requires Zn(2+) as cofactor.

Negatively regulates transcription of bacterial ribonucleotide reductase nrd genes and operons by binding to NrdR-boxes. The polypeptide is Transcriptional repressor NrdR (Neorickettsia sennetsu (strain ATCC VR-367 / Miyayama) (Ehrlichia sennetsu)).